A 59-amino-acid polypeptide reads, in one-letter code: Large ribosomal subunit protein eL37 (59 aa).

Zn(2+) is bound by residues cysteine 20, cysteine 23, cysteine 35, and cysteine 38. A C4-type zinc finger spans residues 20–38; it reads CRRCGRHSFHRRKGYCAAC.

Belongs to the eukaryotic ribosomal protein eL37 family. It depends on Zn(2+) as a cofactor.

Its function is as follows. Binds to the 23S rRNA. This Archaeoglobus fulgidus (strain ATCC 49558 / DSM 4304 / JCM 9628 / NBRC 100126 / VC-16) protein is Large ribosomal subunit protein eL37 (rpl37e).